The chain runs to 256 residues: Trypsin, alkaline C (256 aa).

The first 17 residues, 1–17 (MRLFLALLALGFAAVAA), serve as a signal peptide directing secretion. The propeptide at 18–24 (VPANPQR) is activation peptide. A Peptidase S1 domain is found at 25–256 (IVGGSTTTIQ…RYTSWISNNS (232 aa)). Cys-55 and Cys-71 form a disulfide bridge. Residues His-70 and Asp-115 each act as charge relay system in the active site. Intrachain disulfides connect Cys-180–Cys-197 and Cys-209–Cys-233. The active-site Charge relay system is the Ser-213.

This sequence belongs to the peptidase S1 family. As to expression, midgut.

It localises to the secreted. It is found in the extracellular space. The catalysed reaction is Preferential cleavage: Arg-|-Xaa, Lys-|-Xaa.. The protein is Trypsin, alkaline C of Manduca sexta (Tobacco hawkmoth).